Reading from the N-terminus, the 461-residue chain is Tubulin gamma chain (461 aa).

142-148 contacts GTP; sequence AGGTGSG.

Belongs to the tubulin family.

The protein resides in the cytoplasm. Its subcellular location is the cytoskeleton. It is found in the microtubule organizing center. The protein localises to the spindle pole body. Its function is as follows. Tubulin is the major constituent of microtubules. The gamma chain is found at microtubule organizing centers (MTOC) such as the spindle poles or the centrosome, suggesting that it is involved in the minus-end nucleation of microtubule assembly. In Neurospora crassa (strain ATCC 24698 / 74-OR23-1A / CBS 708.71 / DSM 1257 / FGSC 987), this protein is Tubulin gamma chain (tbg).